The following is a 345-amino-acid chain: Magnesium-chelatase 38 kDa subunit (345 aa).

35 to 42 (GDRGTGKS) contributes to the ATP binding site.

Belongs to the Mg-chelatase subunits D/I family.

The enzyme catalyses protoporphyrin IX + Mg(2+) + ATP + H2O = Mg-protoporphyrin IX + ADP + phosphate + 3 H(+). The protein operates within porphyrin-containing compound metabolism; bacteriochlorophyll biosynthesis. In terms of biological role, involved in bacteriochlorophyll biosynthesis; introduces a magnesium ion into protoporphyrin IX to yield Mg-protoporphyrin IX. The polypeptide is Magnesium-chelatase 38 kDa subunit (bchI) (Acidiphilium rubrum).